Consider the following 333-residue polypeptide: Tetraacyldisaccharide 4'-kinase (333 aa).

I57–T64 contacts ATP.

The protein belongs to the LpxK family.

It carries out the reaction a lipid A disaccharide + ATP = a lipid IVA + ADP + H(+). It functions in the pathway glycolipid biosynthesis; lipid IV(A) biosynthesis; lipid IV(A) from (3R)-3-hydroxytetradecanoyl-[acyl-carrier-protein] and UDP-N-acetyl-alpha-D-glucosamine: step 6/6. Its function is as follows. Transfers the gamma-phosphate of ATP to the 4'-position of a tetraacyldisaccharide 1-phosphate intermediate (termed DS-1-P) to form tetraacyldisaccharide 1,4'-bis-phosphate (lipid IVA). This is Tetraacyldisaccharide 4'-kinase from Dechloromonas aromatica (strain RCB).